Consider the following 443-residue polypeptide: Ribosomal protein uS12 methylthiotransferase RimO (443 aa).

One can recognise an MTTase N-terminal domain in the interval 6–116 (PRVGMISLGC…VVNAVHDVVP (111 aa)). The [4Fe-4S] cluster site is built by cysteine 15, cysteine 51, cysteine 80, cysteine 149, cysteine 153, and cysteine 156. One can recognise a Radical SAM core domain in the interval 135–373 (LTPRHYAYLK…MAHQQAISAA (239 aa)). Residues 376–443 (QMKIGKEIEV…DEYDLWAEML (68 aa)) enclose the TRAM domain.

It belongs to the methylthiotransferase family. RimO subfamily. The cofactor is [4Fe-4S] cluster.

The protein localises to the cytoplasm. It carries out the reaction L-aspartate(89)-[ribosomal protein uS12]-hydrogen + (sulfur carrier)-SH + AH2 + 2 S-adenosyl-L-methionine = 3-methylsulfanyl-L-aspartate(89)-[ribosomal protein uS12]-hydrogen + (sulfur carrier)-H + 5'-deoxyadenosine + L-methionine + A + S-adenosyl-L-homocysteine + 2 H(+). Functionally, catalyzes the methylthiolation of an aspartic acid residue of ribosomal protein uS12. The chain is Ribosomal protein uS12 methylthiotransferase RimO from Pseudomonas syringae pv. tomato (strain ATCC BAA-871 / DC3000).